A 525-amino-acid polypeptide reads, in one-letter code: Protein translocase subunit SecD (525 aa).

A run of 6 helical transmembrane segments spans residues 9-29 (LYLV…SLLG), 368-388 (VLIG…GFGM), 392-412 (LAVV…QATL), 415-435 (PGIA…VLIF), 460-480 (FSTI…LYQF), and 487-507 (GFAV…IFVT).

It belongs to the SecD/SecF family. SecD subfamily. As to quaternary structure, forms a complex with SecF. Part of the essential Sec protein translocation apparatus which comprises SecA, SecYEG and auxiliary proteins SecDF-YajC and YidC.

It is found in the cell inner membrane. Its function is as follows. Part of the Sec protein translocase complex. Interacts with the SecYEG preprotein conducting channel. SecDF uses the proton motive force (PMF) to complete protein translocation after the ATP-dependent function of SecA. The sequence is that of Protein translocase subunit SecD from Magnetococcus marinus (strain ATCC BAA-1437 / JCM 17883 / MC-1).